The chain runs to 102 residues: Small ribosomal subunit protein uS10 (102 aa).

The segment at 30 to 58 is disordered; sequence TGVNLSGPIPLPTKTLEIPTRKSPDGEGT.

This sequence belongs to the universal ribosomal protein uS10 family. In terms of assembly, part of the 30S ribosomal subunit.

In terms of biological role, involved in the binding of tRNA to the ribosomes. The chain is Small ribosomal subunit protein uS10 from Haloquadratum walsbyi (strain DSM 16790 / HBSQ001).